Consider the following 301-residue polypeptide: Probable cyclic nucleotide phosphodiesterase RER_40650 (301 aa).

Fe cation contacts are provided by aspartate 20, histidine 22, aspartate 61, asparagine 95, histidine 167, histidine 205, and histidine 207. Residues histidine 22, aspartate 61, and 95 to 96 (NH) contribute to the AMP site. AMP is bound at residue histidine 207.

It belongs to the cyclic nucleotide phosphodiesterase class-III family. The cofactor is Fe(2+).

This Rhodococcus erythropolis (strain PR4 / NBRC 100887) protein is Probable cyclic nucleotide phosphodiesterase RER_40650.